Reading from the N-terminus, the 793-residue chain is Protein translocase subunit SecA 2 (793 aa).

ATP contacts are provided by residues Gln-77, 95-99, and Asp-493; that span reads GEGKT.

This sequence belongs to the SecA family. Monomer and homodimer (Potential). Part of the accessory SecA2/SecY2 protein translocation apparatus required to export cell wall protein GspB.

The protein localises to the cell membrane. It is found in the cytoplasm. It carries out the reaction ATP + H2O + cellular proteinSide 1 = ADP + phosphate + cellular proteinSide 2.. Its function is as follows. Part of the accessory SecA2/SecY2 system specifically required to export GspB, a serine-rich repeat cell wall protein encoded upstream in the same operon. The sequence is that of Protein translocase subunit SecA 2 from Streptococcus gordonii.